The primary structure comprises 283 residues: ESX-1 secretion-associated protein EspG1 (283 aa).

This sequence belongs to the EspG family. Interacts specifically with ESX-1-dependent PE/PPE proteins. Interacts with PPE68.

It localises to the cytoplasm. Specific chaperone for cognate PE/PPE proteins. Plays an important role in preventing aggregation of PE/PPE dimers. The protein is ESX-1 secretion-associated protein EspG1 of Mycobacterium tuberculosis (strain ATCC 25618 / H37Rv).